The chain runs to 307 residues: 4-hydroxythreonine-4-phosphate dehydrogenase (307 aa).

Positions 126 and 127 each coordinate substrate. Positions 156, 195, and 251 each coordinate a divalent metal cation. Positions 259, 268, and 277 each coordinate substrate.

The protein belongs to the PdxA family. Homodimer. Zn(2+) serves as cofactor. It depends on Mg(2+) as a cofactor. Co(2+) is required as a cofactor.

Its subcellular location is the cytoplasm. It carries out the reaction 4-(phosphooxy)-L-threonine + NAD(+) = 3-amino-2-oxopropyl phosphate + CO2 + NADH. It participates in cofactor biosynthesis; pyridoxine 5'-phosphate biosynthesis; pyridoxine 5'-phosphate from D-erythrose 4-phosphate: step 4/5. Its function is as follows. Catalyzes the NAD(P)-dependent oxidation of 4-(phosphooxy)-L-threonine (HTP) into 2-amino-3-oxo-4-(phosphooxy)butyric acid which spontaneously decarboxylates to form 3-amino-2-oxopropyl phosphate (AHAP). This Helicobacter pylori (strain HPAG1) protein is 4-hydroxythreonine-4-phosphate dehydrogenase.